The chain runs to 485 residues: Probable WRKY transcription factor 10 (485 aa).

2 disordered regions span residues 43–62 (IFPQESLPRDHTDQSGQRSG) and 215–293 (ISIE…SKTQ). The segment covering 216–264 (SIEDSESEDGNKDDDDEDFQYEDEDEDQYDQDQDVDEDEEEEKDEDNVA) has biased composition (acidic residues). The WRKY DNA-binding region spans 301–366 (SDEDNPNDGY…YDGIHNHPSP (66 aa)). Zn(2+)-binding residues include Cys332, Cys337, His361, and His363. The tract at residues 358-417 (DGIHNHPSPPARRSNSSSRNRSAGATIPQNQNDRTSRLGRAPPTPTPPTPPPSSYTPEEM) is disordered. Residues 368-380 (ARRSNSSSRNRSA) are compositionally biased toward low complexity. Positions 399–411 (PPTPTPPTPPPSS) are enriched in pro residues.

Belongs to the WRKY group I family. In terms of assembly, interacts with IKU1. In terms of tissue distribution, expressed in male gametophytes (pollen) and in the endosperm of fertilized ovules.

The protein resides in the nucleus. Its function is as follows. Transcription factor. Interacts specifically with the W box (5'-(T)TGAC[CT]-3'), a frequently occurring elicitor-responsive cis-acting element. Modulates seed size by negatively regulating the cellularization of syncytial endosperm. This chain is Probable WRKY transcription factor 10 (WRKY10), found in Arabidopsis thaliana (Mouse-ear cress).